The following is a 282-amino-acid chain: N-methyltransferase gliN (282 aa).

Belongs to the methyltransferase superfamily. LaeA methyltransferase family.

Its pathway is mycotoxin biosynthesis. Its function is as follows. N-methyltransferase; part of the gene cluster that mediates the biosynthesis of gliotoxin, a member of the epipolythiodioxopiperazine (ETP) class of toxins characterized by a disulfide bridged cyclic dipeptide. The first step in gliotoxin biosynthesis is the condensation of serine and phenylalanine to form the cyclo-L-phenylalanyl-L-serine diketopiperazine (DKP) by the NRPS gliP. GliP is also able to produce the DKP cyclo-L-tryptophanyl-L-serine, suggesting that the substrate specificity of the first adenylation (A) domain in gliP is sufficiently relaxed to accommodate both L-Phe and L-Trp. The cytochrome P450 monooxygenase gliC has been shown to catalyze the subsequent hydroxylation of the alpha-carbon of L-Phe in cyclo-L-phenylalanyl-L-serine whereas the second cytochrome P450 enzyme, gliF, is presumably involved in the modification of the DKP side chain. The glutathione S-transferase (GST) gliG then forms a bis-glutathionylated biosynthetic intermediate which is responsible for the sulfurization of gliotoxin. This bis-glutathionylated intermediate is subsequently processed by the gamma-glutamyl cyclotransferase gliK to remove both gamma-glutamyl moieties. Subsequent processing via gliI yields a biosynthetic intermediate, which is N-methylated via the N-methyltransferase gliN, before the gliotoxin oxidoreductase gliT-mediated disulfide bridge closure. GliN-mediated amide methylation confers stability to ETP, damping the spontaneous formation of tri- and tetrasulfides. Intracellular dithiol gliotoxin oxidized by gliT is subsequently effluxed by gliA. Gliotoxin contributes to pathogenesis during invasive aspergillosis. In macrophages and neutrophils, gliotoxin showed inhibition of various different cell functions including cytokine production, antigen presentation, phagocytosis, and production of reactive oxygen species. The polypeptide is N-methyltransferase gliN (Aspergillus fumigatus (strain ATCC MYA-4609 / CBS 101355 / FGSC A1100 / Af293) (Neosartorya fumigata)).